A 92-amino-acid polypeptide reads, in one-letter code: Large ribosomal subunit protein eL43z (92 aa).

The C4-type zinc finger occupies 39-60 (CEFCGKYSVKRKVVGIWGCKDC).

Belongs to the eukaryotic ribosomal protein eL43 family.

This is Large ribosomal subunit protein eL43z (RPL37AB) from Arabidopsis thaliana (Mouse-ear cress).